The chain runs to 228 residues: Indole-3-glycerol phosphate synthase (228 aa).

This sequence belongs to the TrpC family.

It catalyses the reaction 1-(2-carboxyphenylamino)-1-deoxy-D-ribulose 5-phosphate + H(+) = (1S,2R)-1-C-(indol-3-yl)glycerol 3-phosphate + CO2 + H2O. Its pathway is amino-acid biosynthesis; L-tryptophan biosynthesis; L-tryptophan from chorismate: step 4/5. The chain is Indole-3-glycerol phosphate synthase from Pyrococcus furiosus (strain ATCC 43587 / DSM 3638 / JCM 8422 / Vc1).